We begin with the raw amino-acid sequence, 146 residues long: Sordarin/hypoxysordarin biosynthesis cluster protein G (146 aa).

The protein operates within antibiotic biosynthesis. Part of the gene cluster that mediates the biosynthesis of sordarin and hypoxysordarin, glycoside antibiotics with a unique tetracyclic diterpene aglycone structure. First, the geranylgeranyl diphosphate synthase sdnC constructs GGDP from farnesyl diphosphate and isopentenyl diphosphate. The diterpene cyclase sdnA then catalyzes the cyclization of GGDP to afford cycloaraneosene. Cycloaraneosene is then hydroxylated four times by the putative cytochrome P450 monooxygenases sdnB, sdnE, sdnF and sdnH to give a hydroxylated cycloaraneosene derivative such as cycloaraneosene-8,9,13,19-tetraol. Although the order of the hydroxylations is unclear, at least C8, C9 and C13 of the cycloaraneosene skeleton are hydroxylated before the sordaricin formation. Dehydration of the 13-hydroxy group of the hydroxylated cycloaraneosene derivative might be catalyzed by an unassigned hypothetical protein such as sdnG and sdnP to construct the cyclopentadiene moiety. The FAD-dependent oxidoreductase sdnN is proposed to catalyze the oxidation at C9 of the hydroxylated cycloaraneosene derivative and also catalyze the Baeyer-Villiger oxidation to give the lactone intermediate. The presumed lactone intermediate would be hydrolyzed to give an acrolein moiety and a carboxylate moiety. Then, [4+2]cycloaddition would occur between the acrolein moiety and the cyclopentadiene moiety to give sordaricin. SdnN might also be involved in the [4+2]cycloaddition after the hypothesized oxidation to accommodate the oxidized product and prompt the [4+2]cycloaddition. GDP-6-deoxy-D-altrose may be biosynthesized from GDP-D-mannose by the putative GDP-mannose-4,6-dehydratase sdnI and the short-chain dehydrogenase sdnK. The glycosyltransferase sdnJ catalyzes the attachment of 6-deoxy-D-altrose onto the 19-hydroxy group of sordaricin to give 4'-O-demethylsordarin. The methyltransferase sdnD would complete the biosynthesis of sordarin. Sordarin can be further modified into hypoxysordarin. The unique acyl chain at the 3'-hydroxy group of hypoxysordarin would be constructed by an iterative type I PKS sdnO and the trans-acting polyketide methyltransferase sdnL. SdnL would be responsible for the introduction of an alpha-methyl group of the polyketide chain. Alternatively, the beta-lactamase-like protein sdnR might be responsible for the cleavage and transfer of the polyketide chain from the PKS sdnO to sordarin. Two putative cytochrome P450 monooxygenases, sdnQ and sdnT, might catalyze the epoxidations of the polyketide chain to complete the biosynthesis of hypoxysordarin. Transcriptional regulators sdnM and sdnS are presumably encoded for the transcriptional regulation of the expression of the sdn gene cluster. In Sordaria araneosa (Pleurage araneosa), this protein is Sordarin/hypoxysordarin biosynthesis cluster protein G.